The sequence spans 96 residues: Nucleoid-associated protein CF0672 (96 aa).

The protein belongs to the YbaB/EbfC family. In terms of assembly, homodimer.

It is found in the cytoplasm. The protein localises to the nucleoid. Functionally, binds to DNA and alters its conformation. May be involved in regulation of gene expression, nucleoid organization and DNA protection. This is Nucleoid-associated protein CF0672 from Chlamydia felis (strain Fe/C-56) (Chlamydophila felis).